The primary structure comprises 413 residues: Putative adhesin P1-like protein MPN_144 (413 aa).

3 stretches are compositionally biased toward polar residues: residues 1–13 (MGQQGQSGTSAGN), 25–54 (SGDSLTTQDGNATGQQEATNYTNLPPNLTP), and 355–376 (SFGTDHSTQPQSLKTTTPVFGT). Disordered regions lie at residues 1–60 (MGQQ…DWPN) and 355–413 (SFGT…VSGH). Positions 385–399 (LSGGGAGGGSSGSGQ) are enriched in gly residues.

This sequence belongs to the adhesin P1 family.

The chain is Putative adhesin P1-like protein MPN_144 from Mycoplasma pneumoniae (strain ATCC 29342 / M129 / Subtype 1) (Mycoplasmoides pneumoniae).